Reading from the N-terminus, the 225-residue chain is Endonuclease V (225 aa).

2 residues coordinate Mg(2+): D43 and D110.

This sequence belongs to the endonuclease V family. The cofactor is Mg(2+).

The protein resides in the cytoplasm. The catalysed reaction is Endonucleolytic cleavage at apurinic or apyrimidinic sites to products with a 5'-phosphate.. In terms of biological role, DNA repair enzyme involved in the repair of deaminated bases. Selectively cleaves double-stranded DNA at the second phosphodiester bond 3' to a deoxyinosine leaving behind the intact lesion on the nicked DNA. The protein is Endonuclease V of Thermotoga petrophila (strain ATCC BAA-488 / DSM 13995 / JCM 10881 / RKU-1).